The primary structure comprises 486 residues: Ribosomal RNA small subunit methyltransferase F (486 aa).

S-adenosyl-L-methionine is bound by residues 124 to 130 (ASAPGSK), Glu148, Asp175, and Asp193. Residue Cys246 is the Nucleophile of the active site.

Belongs to the class I-like SAM-binding methyltransferase superfamily. RsmB/NOP family.

It localises to the cytoplasm. The enzyme catalyses cytidine(1407) in 16S rRNA + S-adenosyl-L-methionine = 5-methylcytidine(1407) in 16S rRNA + S-adenosyl-L-homocysteine + H(+). Its function is as follows. Specifically methylates the cytosine at position 1407 (m5C1407) of 16S rRNA. The polypeptide is Ribosomal RNA small subunit methyltransferase F (Shewanella putrefaciens (strain CN-32 / ATCC BAA-453)).